Here is a 182-residue protein sequence, read N- to C-terminus: NADH-quinone oxidoreductase subunit C 2 (182 aa).

Positions 153-182 (YKDKLNPFGAEGPPPTQPDLATNDIPQGGR) are disordered.

Belongs to the complex I 30 kDa subunit family. As to quaternary structure, NDH-1 is composed of 14 different subunits. Subunits NuoB, C, D, E, F, and G constitute the peripheral sector of the complex.

The protein localises to the cell inner membrane. The catalysed reaction is a quinone + NADH + 5 H(+)(in) = a quinol + NAD(+) + 4 H(+)(out). Functionally, NDH-1 shuttles electrons from NADH, via FMN and iron-sulfur (Fe-S) centers, to quinones in the respiratory chain. The immediate electron acceptor for the enzyme in this species is believed to be ubiquinone. Couples the redox reaction to proton translocation (for every two electrons transferred, four hydrogen ions are translocated across the cytoplasmic membrane), and thus conserves the redox energy in a proton gradient. In Rhizobium meliloti (strain 1021) (Ensifer meliloti), this protein is NADH-quinone oxidoreductase subunit C 2.